Here is a 361-residue protein sequence, read N- to C-terminus: Chorismate synthase (361 aa).

The NADP(+) site is built by R48 and R54. Residues 125–127 (RSS), 238–239 (NA), G278, 293–297 (KPTSS), and R319 contribute to the FMN site.

This sequence belongs to the chorismate synthase family. In terms of assembly, homotetramer. FMNH2 is required as a cofactor.

The catalysed reaction is 5-O-(1-carboxyvinyl)-3-phosphoshikimate = chorismate + phosphate. Its pathway is metabolic intermediate biosynthesis; chorismate biosynthesis; chorismate from D-erythrose 4-phosphate and phosphoenolpyruvate: step 7/7. Its function is as follows. Catalyzes the anti-1,4-elimination of the C-3 phosphate and the C-6 proR hydrogen from 5-enolpyruvylshikimate-3-phosphate (EPSP) to yield chorismate, which is the branch point compound that serves as the starting substrate for the three terminal pathways of aromatic amino acid biosynthesis. This reaction introduces a second double bond into the aromatic ring system. The protein is Chorismate synthase of Klebsiella pneumoniae (strain 342).